We begin with the raw amino-acid sequence, 113 residues long: Hydrogenase maturation factor HybF (113 aa).

Ni(2+) is bound by residues histidine 2 and glutamate 3. The Zn(2+) site is built by cysteine 73, cysteine 76, cysteine 89, and cysteine 92.

The protein belongs to the HypA/HybF family. HybF subfamily. Monomer.

In terms of biological role, involved in the maturation of [NiFe] hydrogenases. Required for nickel insertion into the metal center of the hydrogenase. HybF is involved in maturation of hydrogenases 1 and 2. It may partially substitute for the function of HypA and vice versa. The chain is Hydrogenase maturation factor HybF from Escherichia coli (strain K12).